The following is a 182-amino-acid chain: Pyruvoyl-dependent arginine decarboxylase (182 aa).

S44 bears the Pyruvic acid (Ser) mark.

The protein belongs to the PdaD family. Pyruvate serves as cofactor.

It catalyses the reaction L-arginine + H(+) = agmatine + CO2. This chain is Pyruvoyl-dependent arginine decarboxylase, found in Thermoplasma volcanium (strain ATCC 51530 / DSM 4299 / JCM 9571 / NBRC 15438 / GSS1).